We begin with the raw amino-acid sequence, 444 residues long: ATP-dependent protease ATPase subunit HslU (444 aa).

ATP-binding positions include Val18, 60-65, Asp258, Glu323, and Arg395; that span reads GVGKTE.

It belongs to the ClpX chaperone family. HslU subfamily. In terms of assembly, a double ring-shaped homohexamer of HslV is capped on each side by a ring-shaped HslU homohexamer. The assembly of the HslU/HslV complex is dependent on binding of ATP.

The protein resides in the cytoplasm. Its function is as follows. ATPase subunit of a proteasome-like degradation complex; this subunit has chaperone activity. The binding of ATP and its subsequent hydrolysis by HslU are essential for unfolding of protein substrates subsequently hydrolyzed by HslV. HslU recognizes the N-terminal part of its protein substrates and unfolds these before they are guided to HslV for hydrolysis. This Thioalkalivibrio sulfidiphilus (strain HL-EbGR7) protein is ATP-dependent protease ATPase subunit HslU.